We begin with the raw amino-acid sequence, 322 residues long: tRNA-modifying protein YgfZ (322 aa).

Tryptophan 182 provides a ligand contact to folate.

It belongs to the tRNA-modifying YgfZ family.

The protein localises to the cytoplasm. In terms of biological role, folate-binding protein involved in regulating the level of ATP-DnaA and in the modification of some tRNAs. It is probably a key factor in regulatory networks that act via tRNA modification, such as initiation of chromosomal replication. This chain is tRNA-modifying protein YgfZ, found in Vibrio campbellii (strain ATCC BAA-1116).